A 363-amino-acid chain; its full sequence is Glutamate 5-kinase (363 aa).

Lys6 lines the ATP pocket. Ser46, Asp133, and Asn145 together coordinate substrate. ATP-binding positions include 165–166 and 207–213; these read TD and TGGMHTK. Positions 271–349 constitute a PUA domain; it reads HGRLLLDGGA…REIEALLGYT (79 aa).

Belongs to the glutamate 5-kinase family.

Its subcellular location is the cytoplasm. The catalysed reaction is L-glutamate + ATP = L-glutamyl 5-phosphate + ADP. Its pathway is amino-acid biosynthesis; L-proline biosynthesis; L-glutamate 5-semialdehyde from L-glutamate: step 1/2. Catalyzes the transfer of a phosphate group to glutamate to form L-glutamate 5-phosphate. This Deinococcus radiodurans (strain ATCC 13939 / DSM 20539 / JCM 16871 / CCUG 27074 / LMG 4051 / NBRC 15346 / NCIMB 9279 / VKM B-1422 / R1) protein is Glutamate 5-kinase.